The sequence spans 357 residues: Alanine racemase (357 aa).

Lysine 33 (proton acceptor; specific for D-alanine) is an active-site residue. Lysine 33 carries the post-translational modification N6-(pyridoxal phosphate)lysine. A substrate-binding site is contributed by arginine 129. Tyrosine 253 serves as the catalytic Proton acceptor; specific for L-alanine. Methionine 301 is a binding site for substrate.

It belongs to the alanine racemase family. Pyridoxal 5'-phosphate is required as a cofactor.

It carries out the reaction L-alanine = D-alanine. It functions in the pathway amino-acid biosynthesis; D-alanine biosynthesis; D-alanine from L-alanine: step 1/1. In terms of biological role, catalyzes the interconversion of L-alanine and D-alanine. May also act on other amino acids. This chain is Alanine racemase (alr), found in Pseudomonas syringae pv. syringae (strain B728a).